A 320-amino-acid polypeptide reads, in one-letter code: Foldase protein PrsA (320 aa).

An N-terminal signal peptide occupies residues 1–20; it reads MKMINKLIVPVTASALLLGA. Residue C21 is the site of N-palmitoyl cysteine attachment. C21 is lipidated: S-diacylglycerol cysteine. Positions 139-245 constitute a PpiC domain; the sequence is EDSKKASHIL…FGYHIIKADK (107 aa). The tract at residues 159–198 is disordered; the sequence is EGLDDKEAKQKAEEIQKEVSKDPSKFGEIAKKESMDTGSA.

Belongs to the PrsA family.

It is found in the cell membrane. The catalysed reaction is [protein]-peptidylproline (omega=180) = [protein]-peptidylproline (omega=0). Plays a major role in protein secretion by helping the post-translocational extracellular folding of several secreted proteins. This Staphylococcus aureus (strain bovine RF122 / ET3-1) protein is Foldase protein PrsA.